The chain runs to 199 residues: MEVILLERVAKLGQMGDIVTVKNGYARNFLLKRHKALRATADNRAKYEGMKADLEAKNIAAKGEAAKVAEKIEGRNVVIIRQASEGGQLYGSVSVRDIMAALAADGVSLSRHQVLLEHPIKEIGQHKITIAVHPEVEIHVTATVARSEAEAERINRGEDINSRQEDQDAAAEAIAAAGEFFDPEAQDETPETEAASEQQ.

Residues 149 to 166 (AEAERINRGEDINSRQED) show a composition bias toward basic and acidic residues. The disordered stretch occupies residues 149–199 (AEAERINRGEDINSRQEDQDAAAEAIAAAGEFFDPEAQDETPETEAASEQQ). Positions 181-191 (FDPEAQDETPE) are enriched in acidic residues.

The protein belongs to the bacterial ribosomal protein bL9 family.

In terms of biological role, binds to the 23S rRNA. The chain is Large ribosomal subunit protein bL9 from Afipia carboxidovorans (strain ATCC 49405 / DSM 1227 / KCTC 32145 / OM5) (Oligotropha carboxidovorans).